A 395-amino-acid chain; its full sequence is MTHTLYPTPFALYPINISAAWHLGPLPVSCFVSNKYQCSLAFGATTGLRVLVVVVPQTQLSFLSSLCLVSLFLHSLVSAHGEKPTKPVGLDPTLFQVVVGILGNFSLLYYYMFLYFRGYKPRSTDLILRHLTVADSLVILSKRIPETMATFGLKHFDNYFGCKFLLYAHRVGRGVSIGSTCLLSVFQVITINPRNSRWAEMKVKAPTYIGLSNILCWAFHMLVNAIFPIYTTGKWSNNNITKKGDLGYCSAPLSDEVTKSVYAALTSFHDVLCLGLMLWASSSIVLVLYRHKQQVQHICRNNLYPNSSPGNRAIQSILALVSTFALCYALSFITYVYLALFDNSSWWLVNTAALIIACFPTISPFVLMCRDPSRSRLCSICCRRNRRFFHDFRKM.

The chain crosses the membrane as a helical span at residues 12 to 32 (LYPINISAAWHLGPLPVSCFV). Topologically, residues 33-51 (SNKYQCSLAFGATTGLRVL) are extracellular. Residues 52-72 (VVVVPQTQLSFLSSLCLVSLF) form a helical membrane-spanning segment. At 73 to 93 (LHSLVSAHGEKPTKPVGLDPT) the chain is on the cytoplasmic side. The helical transmembrane segment at 94-114 (LFQVVVGILGNFSLLYYYMFL) threads the bilayer. Residues 115–170 (YFRGYKPRSTDLILRHLTVADSLVILSKRIPETMATFGLKHFDNYFGCKFLLYAHR) lie on the Extracellular side of the membrane. Residues 171 to 191 (VGRGVSIGSTCLLSVFQVITI) traverse the membrane as a helical segment. Residues 192–208 (NPRNSRWAEMKVKAPTY) lie on the Cytoplasmic side of the membrane. The chain crosses the membrane as a helical span at residues 209–229 (IGLSNILCWAFHMLVNAIFPI). Topologically, residues 230-267 (YTTGKWSNNNITKKGDLGYCSAPLSDEVTKSVYAALTS) are extracellular. A glycan (N-linked (GlcNAc...) asparagine) is linked at Asn239. Residues 268–288 (FHDVLCLGLMLWASSSIVLVL) form a helical membrane-spanning segment. Residues 289 to 316 (YRHKQQVQHICRNNLYPNSSPGNRAIQS) are Cytoplasmic-facing. The chain crosses the membrane as a helical span at residues 317–337 (ILALVSTFALCYALSFITYVY). Residues 338–346 (LALFDNSSW) are Extracellular-facing. N-linked (GlcNAc...) asparagine glycosylation occurs at Asn343. Residues 347 to 367 (WLVNTAALIIACFPTISPFVL) traverse the membrane as a helical segment. The Cytoplasmic segment spans residues 368–395 (MCRDPSRSRLCSICCRRNRRFFHDFRKM).

The protein belongs to the G-protein coupled receptor 1 family.

The protein resides in the cell membrane. Functionally, putative pheromone receptor. The chain is Vomeronasal type-1 receptor 2 (VN1R2) from Homo sapiens (Human).